A 247-amino-acid chain; its full sequence is Probable transcriptional regulatory protein ECA2494 (247 aa).

The protein belongs to the TACO1 family.

It localises to the cytoplasm. This is Probable transcriptional regulatory protein ECA2494 from Pectobacterium atrosepticum (strain SCRI 1043 / ATCC BAA-672) (Erwinia carotovora subsp. atroseptica).